Consider the following 182-residue polypeptide: Protein GrpE (182 aa).

Over residues 1–17 (MEEKKRCEESEKIKEQE) the composition is skewed to basic and acidic residues. The segment at 1 to 33 (MEEKKRCEESEKIKEQENETLPNEDSPSMGKKV) is disordered.

It belongs to the GrpE family. In terms of assembly, homodimer.

It is found in the cytoplasm. Participates actively in the response to hyperosmotic and heat shock by preventing the aggregation of stress-denatured proteins, in association with DnaK and GrpE. It is the nucleotide exchange factor for DnaK and may function as a thermosensor. Unfolded proteins bind initially to DnaJ; upon interaction with the DnaJ-bound protein, DnaK hydrolyzes its bound ATP, resulting in the formation of a stable complex. GrpE releases ADP from DnaK; ATP binding to DnaK triggers the release of the substrate protein, thus completing the reaction cycle. Several rounds of ATP-dependent interactions between DnaJ, DnaK and GrpE are required for fully efficient folding. The protein is Protein GrpE of Borrelia hermsii (strain HS1 / DAH).